Reading from the N-terminus, the 477-residue chain is Calcium/calmodulin-dependent protein kinase type 1G (477 aa).

Residues 23-277 (FIFMEVLGSG…CEKALRHPWI (255 aa)) form the Protein kinase domain. ATP-binding positions include 29 to 37 (LGSGAFSEV) and Lys-52. Asp-143 serves as the catalytic Proton acceptor. The segment at 277-317 (IDGNTALHRDIYPSVSLQIQKNFAKSKWRQAFNAAAVVHHM) is autoinhibitory domain. The interval 297–318 (KNFAKSKWRQAFNAAAVVHHMR) is calmodulin-binding. The interval 326–388 (SPSVRQEVEN…SRPSAPSGGR (63 aa)) is disordered. The segment covering 376–388 (SHSSRPSAPSGGR) has biased composition (low complexity).

This sequence belongs to the protein kinase superfamily. CAMK Ser/Thr protein kinase family. CaMK subfamily. May be prenylated on Cys-474. In terms of tissue distribution, highly expressed in brain, in neuronal cell bodies of the central nucleus of amygdala and ventromedial hypothalamic nucleus. Also detected in heart, testis, and kidney.

Its subcellular location is the cytoplasm. The protein localises to the golgi apparatus membrane. It localises to the cell membrane. The catalysed reaction is L-seryl-[protein] + ATP = O-phospho-L-seryl-[protein] + ADP + H(+). The enzyme catalyses L-threonyl-[protein] + ATP = O-phospho-L-threonyl-[protein] + ADP + H(+). Its activity is regulated as follows. Activated by Ca(2+)/calmodulin. Binding of calmodulin is thought to result in a conformational change and leads to activation through phosphorylation by CAMKK1. Functionally, calcium/calmodulin-dependent protein kinase belonging to a proposed calcium-triggered signaling cascade. In vitro phosphorylates transcription factor CREB1. The chain is Calcium/calmodulin-dependent protein kinase type 1G (Camk1g) from Mus musculus (Mouse).